Consider the following 528-residue polypeptide: Importin subunit alpha-2 (528 aa).

Low complexity predominate over residues 1-15 (MADDSASPSPSSASP). The disordered stretch occupies residues 1–36 (MADDSASPSPSSASPLQHHREALKSSVRNTAASRRR). ARM repeat units follow at residues 125–165 (VPLV…NIAA), 167–206 (EPEE…NVAG), 209–248 (AELR…NLIK), 253–292 (KAAN…YLSA), 294–335 (SDRG…NLIA), 338–383 (DYMV…NIAA), 386–425 (FEHK…NLCV), and 438–477 (VEHL…LVMR).

This sequence belongs to the importin alpha family. Forms a complex with importin subunit beta-1. The whole complex, most stable and composed of importin alpha, importin beta and NLS substrate, is referred to as PTAC or pore targeting complex. Expressed in root, callus, and etiolated leaf. Low expression in green leaf.

The protein resides in the cytoplasm. The protein localises to the perinuclear region. Functionally, binds specifically and directly to substrates containing either a simple or bipartite NLS motif. Promotes docking of import substrates to the nuclear envelope. In Oryza sativa subsp. japonica (Rice), this protein is Importin subunit alpha-2.